A 316-amino-acid polypeptide reads, in one-letter code: Aspartate carbamoyltransferase catalytic subunit (316 aa).

The carbamoyl phosphate site is built by arginine 58 and threonine 59. Lysine 86 lines the L-aspartate pocket. Carbamoyl phosphate-binding residues include arginine 108, histidine 136, and glutamine 139. L-aspartate-binding residues include arginine 169 and arginine 223. Carbamoyl phosphate is bound by residues glycine 265 and proline 266.

This sequence belongs to the aspartate/ornithine carbamoyltransferase superfamily. ATCase family. Heterododecamer (2C3:3R2) of six catalytic PyrB chains organized as two trimers (C3), and six regulatory PyrI chains organized as three dimers (R2).

The catalysed reaction is carbamoyl phosphate + L-aspartate = N-carbamoyl-L-aspartate + phosphate + H(+). It functions in the pathway pyrimidine metabolism; UMP biosynthesis via de novo pathway; (S)-dihydroorotate from bicarbonate: step 2/3. Catalyzes the condensation of carbamoyl phosphate and aspartate to form carbamoyl aspartate and inorganic phosphate, the committed step in the de novo pyrimidine nucleotide biosynthesis pathway. The chain is Aspartate carbamoyltransferase catalytic subunit from Anaeromyxobacter sp. (strain Fw109-5).